The primary structure comprises 448 residues: UDP-N-acetylmuramoylalanine--D-glutamate ligase (448 aa).

116–122 (GSNAKST) is an ATP binding site.

It belongs to the MurCDEF family.

The protein resides in the cytoplasm. The enzyme catalyses UDP-N-acetyl-alpha-D-muramoyl-L-alanine + D-glutamate + ATP = UDP-N-acetyl-alpha-D-muramoyl-L-alanyl-D-glutamate + ADP + phosphate + H(+). It participates in cell wall biogenesis; peptidoglycan biosynthesis. Cell wall formation. Catalyzes the addition of glutamate to the nucleotide precursor UDP-N-acetylmuramoyl-L-alanine (UMA). This Pseudomonas savastanoi pv. phaseolicola (strain 1448A / Race 6) (Pseudomonas syringae pv. phaseolicola (strain 1448A / Race 6)) protein is UDP-N-acetylmuramoylalanine--D-glutamate ligase.